The following is a 414-amino-acid chain: Histidine--tRNA ligase (414 aa).

This sequence belongs to the class-II aminoacyl-tRNA synthetase family. In terms of assembly, homodimer.

Its subcellular location is the cytoplasm. It catalyses the reaction tRNA(His) + L-histidine + ATP = L-histidyl-tRNA(His) + AMP + diphosphate + H(+). The polypeptide is Histidine--tRNA ligase (Synechococcus sp. (strain RCC307)).